A 253-amino-acid polypeptide reads, in one-letter code: Chloride intracellular channel protein 4 (253 aa).

The residue at position 2 (alanine 2) is an N-acetylalanine. Positions 2 to 101 (ALSMPLNGLK…EEFLEEVLCP (100 aa)) are required for insertion into the membrane. Residue serine 4 is modified to Phosphoserine. At lysine 24 the chain carries N6-acetyllysine. Residues 35–38 (CPFS) carry the G-site motif. The helical transmembrane segment at 37–57 (FSQRLFMILWLKGVVFSVTTV) threads the bilayer. The GST C-terminal domain maps to 81 to 244 (NSEVKTDVNK…PSDKEVEIAY (164 aa)). The residue at position 130 (lysine 130) is an N6-acetyllysine. 3 positions are modified to phosphoserine: serine 132, serine 167, and serine 236. Tyrosine 244 is modified (phosphotyrosine).

This sequence belongs to the chloride channel CLIC family. As to quaternary structure, monomer. Interacts with HRH30. Interacts with AKAP9. Detected in blood vessels in the retina (at protein level). Expressed to the greatest extent in vivo in heart, lung, liver, kidney, and skin.

It localises to the cytoplasm. Its subcellular location is the cytoskeleton. It is found in the microtubule organizing center. The protein localises to the centrosome. The protein resides in the cytoplasmic vesicle membrane. It localises to the nucleus. Its subcellular location is the cell membrane. It is found in the mitochondrion. The protein localises to the cell junction. The catalysed reaction is chloride(in) = chloride(out). It catalyses the reaction thiocyanate(in) = thiocyanate(out). The enzyme catalyses nitrate(in) = nitrate(out). It carries out the reaction iodide(out) = iodide(in). The catalysed reaction is bromide(in) = bromide(out). It catalyses the reaction fluoride(in) = fluoride(out). The enzyme catalyses choline(out) = choline(in). In the soluble state, catalyzes glutaredoxin-like thiol disulfide exchange reactions with reduced glutathione as electron donor. Can insert into membranes and form voltage-dependent multi-ion conductive channels. Membrane insertion seems to be redox-regulated and may occur only under oxidizing conditions. Has alternate cellular functions like a potential role in angiogenesis or in maintaining apical-basolateral membrane polarity during mitosis and cytokinesis. Could also promote endothelial cell proliferation and regulate endothelial morphogenesis (tubulogenesis). Promotes cell-surface expression of HRH3. The sequence is that of Chloride intracellular channel protein 4 (Clic4) from Mus musculus (Mouse).